A 157-amino-acid chain; its full sequence is Protein-export protein SecB (157 aa).

The protein belongs to the SecB family. As to quaternary structure, homotetramer, a dimer of dimers. One homotetramer interacts with 1 SecA dimer.

The protein resides in the cytoplasm. In terms of biological role, one of the proteins required for the normal export of preproteins out of the cell cytoplasm. It is a molecular chaperone that binds to a subset of precursor proteins, maintaining them in a translocation-competent state. It also specifically binds to its receptor SecA. This chain is Protein-export protein SecB, found in Methylobacillus flagellatus (strain ATCC 51484 / DSM 6875 / VKM B-1610 / KT).